A 110-amino-acid polypeptide reads, in one-letter code: Phosphoribosyl-ATP pyrophosphatase (110 aa).

The protein belongs to the PRA-PH family.

It localises to the cytoplasm. The enzyme catalyses 1-(5-phospho-beta-D-ribosyl)-ATP + H2O = 1-(5-phospho-beta-D-ribosyl)-5'-AMP + diphosphate + H(+). It functions in the pathway amino-acid biosynthesis; L-histidine biosynthesis; L-histidine from 5-phospho-alpha-D-ribose 1-diphosphate: step 2/9. In Clostridium acetobutylicum (strain ATCC 824 / DSM 792 / JCM 1419 / IAM 19013 / LMG 5710 / NBRC 13948 / NRRL B-527 / VKM B-1787 / 2291 / W), this protein is Phosphoribosyl-ATP pyrophosphatase (hisE).